The sequence spans 364 residues: Spermidine/putrescine import ATP-binding protein PotA (364 aa).

In terms of domain architecture, ABC transporter spans 5-235 (LSFKDVSKGF…PVNRFVADFI (231 aa)). 37 to 44 (GPSGCGKT) serves as a coordination point for ATP.

This sequence belongs to the ABC transporter superfamily. Spermidine/putrescine importer (TC 3.A.1.11.1) family. The complex is composed of two ATP-binding proteins (PotA), two transmembrane proteins (PotB and PotC) and a solute-binding protein (PotD).

It is found in the cell membrane. The catalysed reaction is ATP + H2O + polyamine-[polyamine-binding protein]Side 1 = ADP + phosphate + polyamineSide 2 + [polyamine-binding protein]Side 1.. Its function is as follows. Part of the ABC transporter complex PotABCD involved in spermidine/putrescine import. Responsible for energy coupling to the transport system. The sequence is that of Spermidine/putrescine import ATP-binding protein PotA from Staphylococcus epidermidis (strain ATCC 12228 / FDA PCI 1200).